The sequence spans 530 residues: RNA-binding protein 39 (530 aa).

The interval Met1–Thr146 is disordered. Ala2 carries the N-acetylalanine modification. The span at Pro14–Ser32 shows a compositional bias: basic and acidic residues. Basic residues-rich tracts occupy residues Lys33 to Lys56 and Lys64 to Tyr95. Residue Tyr95 is modified to Phosphotyrosine. A phosphoserine mark is found at Ser97 and Ser100. Lys111 is covalently cross-linked (Glycyl lysine isopeptide (Lys-Gly) (interchain with G-Cter in SUMO2)). Ser117 is modified (phosphoserine). A Glycyl lysine isopeptide (Lys-Gly) (interchain with G-Cter in SUMO2) cross-link involves residue Lys119. Over residues Lys119–Pro130 the composition is skewed to basic residues. A phosphoserine mark is found at Ser121 and Ser136. Over residues Phe131–Thr146 the composition is skewed to basic and acidic residues. At Thr146 the chain carries Phosphothreonine. Residues Arg153 to Ala230 form the RRM 1 domain. Lys244 is covalently cross-linked (Glycyl lysine isopeptide (Lys-Gly) (interchain with G-Cter in SUMO2)). Residues Met250–Glu328 form the RRM 2 domain. Positions Lys291 to Gly355 are activating domain. The interval Lys291–Gln406 is interaction with JUN. Phosphoserine is present on residues Ser334, Ser337, and Ser341. Residues Gly355 to Gln406 form an interaction with ESR1 and ESR2 region. An interaction with NCOA6 region spans residues Gln406–Arg530. Positions Glu445–Leu508 constitute an RRM 3 domain.

The protein belongs to the splicing factor SR family. As to quaternary structure, interacts with NCOA6 and JUN. Interacts with ESR1 and ESR2, in the presence of estradiol (E2). Interacts with RSRC1 (via Arg/Ser-rich domain). Interacts with SF3B1. Interacts with ZNF106 (via N-terminus). In terms of processing, aryl sulfonamide anticancer drugs, such as indisulam (E7070) or E7820, promote ubiquitination and subsequent degradation by the DCX(DCAF15) complex. RBM39 degradation results in splicing defects and death in cancer cell lines. Aryl sulfonamide anticancer drugs change the substrate specificity of DCAF15 by acting as a molecular glue that promotes binding between DCAF15 and weak affinity interactor RBM39. Widely expressed. Highly expressed in pancreas, skeletal muscle, lung and brain. Expressed at intermediate level in kidney, liver and heart.

The protein localises to the nucleus speckle. Functionally, RNA-binding protein that acts as a pre-mRNA splicing factor. Acts by promoting exon inclusion via regulation of exon cassette splicing. Also acts as a transcriptional coactivator for steroid nuclear receptors ESR1/ER-alpha and ESR2/ER-beta, and JUN/AP-1, independently of the pre-mRNA splicing factor activity. The chain is RNA-binding protein 39 from Homo sapiens (Human).